Consider the following 267-residue polypeptide: MNDILDQIMAAKRAEVAAAQKRVPLAAVRADAESRVLTRDFEGALRAKISQGQAAVIAEIKKASPSKGLLRADFIAADIAQSYAEGDAGVSAACLSVLTDQAFFQGSIDYLKQARASCQLPVLRKDFLLDPYQVYEARAMGADAILLIAACLDDAQLADFEAIARSLDMAVLLEVHDRPELERALARCKTPLVGINNRNLRSFEVSLSTTLDMLADMPPERLPVTESGILTPQDVKTLRDAGVQAFLVGEAFMRAADPGLALARLFA.

The protein belongs to the TrpC family.

The catalysed reaction is 1-(2-carboxyphenylamino)-1-deoxy-D-ribulose 5-phosphate + H(+) = (1S,2R)-1-C-(indol-3-yl)glycerol 3-phosphate + CO2 + H2O. Its pathway is amino-acid biosynthesis; L-tryptophan biosynthesis; L-tryptophan from chorismate: step 4/5. This Verminephrobacter eiseniae (strain EF01-2) protein is Indole-3-glycerol phosphate synthase.